The sequence spans 308 residues: Probable lipid phosphate phosphatase 4 (308 aa).

The next 6 membrane-spanning stretches (helical) occupy residues Trp26–His46, Ile66–Tyr86, Val93–Thr113, Ser162–Leu182, Gly193–Ile213, and Val226–Pro246. Residues Met274–Phe308 are disordered. The span at Pro296–Phe308 shows a compositional bias: basic and acidic residues.

It belongs to the PA-phosphatase related phosphoesterase family.

The protein localises to the membrane. In Arabidopsis thaliana (Mouse-ear cress), this protein is Probable lipid phosphate phosphatase 4 (LPP4).